The primary structure comprises 524 residues: MGGRSSCEDPGCPRGEGRVPRMGCVKSRFLREGSKASKIEPNANQKGPVYVPDPTSPKKLGPNSINSLPPGVVEGSEDTIVVALYDYEAIHREDLSFQKGDQMVVLEESGEWWKARSLATKKEGYIPSNYVARVNSLETEEWFFKGISRKDAERHLLAPGNMLGSFMIRDSETTKGSYSLSVRDFDPQHGDTVKHYKIRTLDSGGFYISPRSTFSSLQELVVHYKKGKDGLCQKLSVPCVSPKPQKPWEKDAWEIPRESLQMEKKLGAGQFGEVWMATYNKHTKVAVKTMKPGSMSVEAFLAEANLMKTLQHDKLVKLHAVVSQEPIFIVTEFMAKGSLLDFLKSEEGSKQPLPKLIDFSAQISEGMAFIEQRNYIHRDLRAANILVSASLVCKIADFGLARIIEDNEYTAREGAKFPIKWTAPEAINFGSFTIKSDVWSFGILLMEIVTYGRIPYPGMSNPEVIRALEHGYRMPRPDNCPEELYSIMIRCWKNRPEERPTFEYIQSVLDDFYTATESQYQQQP.

2 disordered regions span residues 1 to 20 (MGGR…GRVP) and 35 to 71 (KASK…LPPG). G2 carries N-myristoyl glycine lipidation. G3 carries S-palmitoyl cysteine lipidation. Y50 carries the phosphotyrosine; by autocatalysis modification. The region spanning 76–136 (SEDTIVVALY…PSNYVARVNS (61 aa)) is the SH3 domain. An SH2 domain is found at 142 to 239 (WFFKGISRKD…GLCQKLSVPC (98 aa)). At T200 the chain carries Phosphothreonine. At Y207 the chain carries Phosphotyrosine. Residues 260–513 (LQMEKKLGAG…YIQSVLDDFY (254 aa)) form the Protein kinase domain. ATP contacts are provided by residues 266–274 (LGAGQFGEV) and K288. The active-site Proton acceptor is the D379. Y409 carries the post-translational modification Phosphotyrosine; by autocatalysis. Residue S460 is modified to Phosphoserine. Position 520 is a phosphotyrosine (Y520).

Belongs to the protein kinase superfamily. Tyr protein kinase family. SRC subfamily. Interacts with ADAM15. Interacts with FASLG. Interacts with ARRB1 and ARRB2. Interacts with FCGR1A; the interaction may be indirect. Interacts with IL6ST. Interacts (via SH3 domain) with ELMO1. Interacts (via SH3 domain) with TP73. Interacts with YAP1. Interacts with ABL1 and ITGB1, and thereby recruits ABL1 to activated ITGB1. Interacts (via SH2 domain) with FLT3 (tyrosine phosphorylated). Interacts with CBL. Interacts with VAV1, WAS and RAPGEF1. Interacts (via SH3 domain) with WDCP. Post-translationally, phosphorylated on several tyrosine residues. Autophosphorylated. Becomes rapidly phosphorylated upon activation of the immunoglobulin receptors FCGR1A and FCGR2A. Phosphorylation at Tyr-409 increases kinase activity. Phosphorylation at Tyr-520 inhibits kinase activity. Kinase activity is not required for phosphorylation at Tyr-520, suggesting that this site may be a target of other kinases. In terms of processing, ubiquitinated by CBL, leading to its degradation via the proteasome. Isoform 2 palmitoylation at position 2 requires prior myristoylation. Palmitoylation at position 3 is required for caveolar localization of isoform 2. In terms of tissue distribution, expressed strongly in spleen and at very low levels in thymus.

The protein resides in the cytoplasmic vesicle. It localises to the secretory vesicle. The protein localises to the cytoplasm. It is found in the cytosol. Its subcellular location is the membrane. The protein resides in the caveola. It localises to the lysosome. The protein localises to the cell projection. It is found in the podosome membrane. Its subcellular location is the cell membrane. The protein resides in the cell junction. It localises to the focal adhesion. The protein localises to the cytoskeleton. It is found in the golgi apparatus. Its subcellular location is the nucleus. It catalyses the reaction L-tyrosyl-[protein] + ATP = O-phospho-L-tyrosyl-[protein] + ADP + H(+). Its activity is regulated as follows. Subject to autoinhibition, mediated by intramolecular interactions involving the SH2 and SH3 domains. Kinase activity is also regulated by phosphorylation at regulatory tyrosine residues. Phosphorylation at Tyr-409 is required for optimal activity. Phosphorylation at Tyr-520 inhibits kinase activity. In terms of biological role, non-receptor tyrosine-protein kinase found in hematopoietic cells that transmits signals from cell surface receptors and plays an important role in the regulation of innate immune responses, including neutrophil, monocyte, macrophage and mast cell functions, phagocytosis, cell survival and proliferation, cell adhesion and migration. Acts downstream of receptors that bind the Fc region of immunoglobulins, such as FCGR1A and FCGR2A, but also CSF3R, PLAUR, the receptors for IFNG, IL2, IL6 and IL8, and integrins, such as ITGB1 and ITGB2. During the phagocytic process, mediates mobilization of secretory lysosomes, degranulation, and activation of NADPH oxidase to bring about the respiratory burst. Plays a role in the release of inflammatory molecules. Promotes reorganization of the actin cytoskeleton and actin polymerization, formation of podosomes and cell protrusions. Inhibits TP73-mediated transcription activation and TP73-mediated apoptosis. Phosphorylates CBL in response to activation of immunoglobulin gamma Fc region receptors. Phosphorylates ADAM15, BCR, ELMO1, FCGR2A, GAB1, GAB2, RAPGEF1, STAT5B, TP73, VAV1 and WAS. This is Tyrosine-protein kinase HCK (Hck) from Rattus norvegicus (Rat).